Reading from the N-terminus, the 91-residue chain is DNA-binding protein HU (91 aa).

It belongs to the bacterial histone-like protein family.

Its function is as follows. Histone-like DNA-binding protein which is capable of wrapping DNA to stabilize it, and thus to prevent its denaturation under extreme environmental conditions. Also seems to act as a fortuitous virulence factor in delayed sequelae by binding to heparan sulfate-proteoglycans in the extracellular matrix of target organs and acting as a nidus for in situ immune complex formation. This Streptococcus gordonii protein is DNA-binding protein HU (hup).